The chain runs to 164 residues: NAD(P)H-quinone oxidoreductase subunit I, chloroplastic (164 aa).

2 consecutive 4Fe-4S ferredoxin-type domains span residues 55–84 and 95–124; these read GRIHFEFDKCIACEVCVRVCPIDLPVVDWK and LNYSIDFGICIFCGNCVEYCPTNCLSMTEE. The [4Fe-4S] cluster site is built by C64, C67, C70, C74, C104, C107, C110, and C114.

Belongs to the complex I 23 kDa subunit family. As to quaternary structure, NDH is composed of at least 16 different subunits, 5 of which are encoded in the nucleus. It depends on [4Fe-4S] cluster as a cofactor.

It localises to the plastid. Its subcellular location is the chloroplast thylakoid membrane. The enzyme catalyses a plastoquinone + NADH + (n+1) H(+)(in) = a plastoquinol + NAD(+) + n H(+)(out). The catalysed reaction is a plastoquinone + NADPH + (n+1) H(+)(in) = a plastoquinol + NADP(+) + n H(+)(out). Its function is as follows. NDH shuttles electrons from NAD(P)H:plastoquinone, via FMN and iron-sulfur (Fe-S) centers, to quinones in the photosynthetic chain and possibly in a chloroplast respiratory chain. The immediate electron acceptor for the enzyme in this species is believed to be plastoquinone. Couples the redox reaction to proton translocation, and thus conserves the redox energy in a proton gradient. The sequence is that of NAD(P)H-quinone oxidoreductase subunit I, chloroplastic from Daucus carota (Wild carrot).